Consider the following 77-residue polypeptide: U8-lycotoxin-Ls1d (77 aa).

The N-terminal stretch at 1-20 is a signal peptide; sequence MKLIIFTGLVLFAIVSLIEA. The propeptide occupies 21–26; it reads QAENEK.

Belongs to the neurotoxin 19 (CSTX) family. 08 (U8-Lctx) subfamily. In terms of processing, contains 4 disulfide bonds. In terms of tissue distribution, expressed by the venom gland.

Its subcellular location is the secreted. The chain is U8-lycotoxin-Ls1d from Lycosa singoriensis (Wolf spider).